Here is a 73-residue protein sequence, read N- to C-terminus: Large ribosomal subunit protein uL29 (73 aa).

Belongs to the universal ribosomal protein uL29 family.

The sequence is that of Large ribosomal subunit protein uL29 (rpl29) from Saccharolobus solfataricus (strain ATCC 35092 / DSM 1617 / JCM 11322 / P2) (Sulfolobus solfataricus).